We begin with the raw amino-acid sequence, 860 residues long: Leucine--tRNA ligase (860 aa).

Positions 42 to 52 match the 'HIGH' region motif; sequence PYPSGRLHMGH. A 'KMSKS' region motif is present at residues 619-623; that stretch reads KMSKS. ATP is bound at residue lysine 622.

The protein belongs to the class-I aminoacyl-tRNA synthetase family.

It localises to the cytoplasm. The enzyme catalyses tRNA(Leu) + L-leucine + ATP = L-leucyl-tRNA(Leu) + AMP + diphosphate. The sequence is that of Leucine--tRNA ligase from Salmonella typhi.